We begin with the raw amino-acid sequence, 480 residues long: Citrate synthase 1, peroxisomal (480 aa).

Active-site residues include His-321, His-360, and Asp-416.

This sequence belongs to the citrate synthase family. Expressed only in siliques. Not expressed in flower, stem, cauline leaf, young leaf, mature leaf and senescent leaf.

Its subcellular location is the peroxisome. It catalyses the reaction oxaloacetate + acetyl-CoA + H2O = citrate + CoA + H(+). It functions in the pathway carbohydrate metabolism; tricarboxylic acid cycle; isocitrate from oxaloacetate: step 1/2. This Arabidopsis thaliana (Mouse-ear cress) protein is Citrate synthase 1, peroxisomal (CSY1).